The sequence spans 443 residues: D(2) dopamine receptor (443 aa).

Residues 1–37 (MDPLNLSWYDDDLERQNWSRPFNGSDGKADRPHYNYY) lie on the Extracellular side of the membrane. N-linked (GlcNAc...) asparagine glycosylation is found at N5, N17, and N23. The chain crosses the membrane as a helical span at residues 38-60 (ATLLTLLIAVIVFGNVLVCMAVS). The Cytoplasmic segment spans residues 61-70 (REKALQTTTN). Residues 71 to 93 (YLIVSLAVADLLVATLVMPWVVY) traverse the membrane as a helical segment. Residues 94–108 (LEVVGEWKFSRIHCD) are Extracellular-facing. An intrachain disulfide couples C107 to C182. Residues 109-130 (IFVTLDVMMCTASILNLCAISI) traverse the membrane as a helical segment. The Cytoplasmic portion of the chain corresponds to 131–151 (DRYTAVAMPMLYNTRYSSKRR). The helical transmembrane segment at 152–172 (VTVMISIVWVLSFTISCPLLF) threads the bilayer. At 173–188 (GLNNADQNECIIANPA) the chain is on the extracellular side. Residues 189-213 (FVVYSSIVSFYVPFIVTLLVYIKIY) form a helical membrane-spanning segment. The tract at residues 211-373 (KIYIVLRRRR…SQQKEKKATQ (163 aa)) is interaction with PPP1R9B. Residues 214–373 (IVLRRRRKRV…SQQKEKKATQ (160 aa)) are Cytoplasmic-facing. Positions 281–332 (MEMLSSTSPPERTRYSPIPPSHHQLTLPDPSHHGLHSTPDSPAKPEKNGHAK) are disordered. Residues 323 to 332 (AKPEKNGHAK) show a composition bias toward basic and acidic residues. A helical transmembrane segment spans residues 374–395 (MLAIVLGVFIICWLPFFITHIL). Residues 396-409 (NIHCDCNIPPVLYS) lie on the Extracellular side of the membrane. C399 and C401 are disulfide-bonded. The chain crosses the membrane as a helical span at residues 410-431 (AFTWLGYVNSAVNPIIYTTFNI). Residues 432–443 (EFRKAFLKILHC) lie on the Cytoplasmic side of the membrane. C443 carries the S-palmitoyl cysteine lipid modification.

Belongs to the G-protein coupled receptor 1 family. In terms of assembly, forms homo- and heterooligomers with DRD4. The interaction with DRD4 may modulate agonist-induced downstream signaling. Interacts with CADPS and CADPS2. Interacts with GPRASP1, PPP1R9B and CLIC6. Interacts with ARRB2. Interacts with HTR2A. Interacts with GNAI2 isoform sGi2, the interaction allows the creation of an intracellular pool of DRD2 that can be released to cell surface upon agonist stimulation. Interacts with DRD1. Interacts with KCNA2. Palmitoylated. Palmitoylation which is required for proper localization to the plasma membrane and stability of the receptor could be carried on by ZDHHC4, ZDHHC3 and ZDHHC8. Expressed in the anterior pituitary gland.

It localises to the cell membrane. The protein localises to the golgi apparatus membrane. Dopamine receptor whose activity is mediated by G proteins which inhibit adenylyl cyclase. Positively regulates postnatal regression of retinal hyaloid vessels via suppression of VEGFR2/KDR activity, downstream of OPN5. The protein is D(2) dopamine receptor (DRD2) of Homo sapiens (Human).